A 55-amino-acid polypeptide reads, in one-letter code: Large ribosomal subunit protein bL33 (55 aa).

This sequence belongs to the bacterial ribosomal protein bL33 family.

The protein is Large ribosomal subunit protein bL33 of Phenylobacterium zucineum (strain HLK1).